Here is a 281-residue protein sequence, read N- to C-terminus: INSIG family protein (281 aa).

Residues 1 to 93 (MSRKEIYEPR…FIDYSSLITF (93 aa)) lie on the Cytoplasmic side of the membrane. S28 carries the phosphoserine modification. The chain crosses the membrane as a helical span at residues 94-120 (FCKLCVIFGLGFVFTYLAEQIVQDAKL). The Lumenal segment spans residues 121-134 (PLLTVNLKSWKFEP). The chain crosses the membrane as a helical span at residues 135–159 (PWPAIFGFVAVILGLSYRRMDTKYP). At 160–170 (LGAAPLRPSQS) the chain is on the cytoplasmic side. Residues 171–186 (SKWQWISRYLAAFATL) form a helical membrane-spanning segment. Residues 187–189 (LLS) are Lumenal-facing. The chain crosses the membrane as a helical span at residues 190–215 (MKKLLFISNSHSIVALVASSASIWYI). The Cytoplasmic segment spans residues 216–221 (FDRSRN). Residues 222-256 (GIILSTITSVLGSILYYNLVDTSKIELNGVEFPEI) form a helical membrane-spanning segment. Residues 257-260 (QFRL) lie on the Lumenal side of the membrane. A helical membrane pass occupies residues 261–281 (WIPMILFSASTIVGNAGRLLF).

Belongs to the INSIG family.

Its subcellular location is the endoplasmic reticulum membrane. This is INSIG family protein (ins1) from Schizosaccharomyces pombe (strain 972 / ATCC 24843) (Fission yeast).